The primary structure comprises 168 residues: Putative flavin-containing monooxygenase FMO GS-OX-like 11 (168 aa).

17 to 22 (GAGAAG) lines the FAD pocket.

It belongs to the FMO family. FAD is required as a cofactor.

In terms of biological role, catalyzes the conversion of methylthioalkyl glucosinolates of any chain length into methylsulfinylalkyl glucosinolates. This is Putative flavin-containing monooxygenase FMO GS-OX-like 11 from Arabidopsis thaliana (Mouse-ear cress).